The primary structure comprises 38 residues: Large ribosomal subunit protein bL36 (38 aa).

Belongs to the bacterial ribosomal protein bL36 family.

This Fervidobacterium nodosum (strain ATCC 35602 / DSM 5306 / Rt17-B1) protein is Large ribosomal subunit protein bL36.